A 380-amino-acid chain; its full sequence is Cyclohex-1-ene-1-carbonyl-CoA dehydrogenase (380 aa).

Catalysis depends on Asp91, which acts as the Proton acceptor. FAD is bound by residues Leu122, Ala124, Thr125, Ser131, and Thr157. Ser131 contacts cyclohex-1-ene-1-carbonyl-CoA. Residue Ser131 participates in cyclohexa-1,5-diene-1-carbonyl-CoA binding. Cyclohex-1-ene-1-carbonyl-CoA contacts are provided by Lys178, Arg242, and Thr363. Residues Lys178, Arg242, and Thr363 each coordinate cyclohexa-1,5-diene-1-carbonyl-CoA. FAD is bound by residues Thr365 and Gln367. Arg375 serves as a coordination point for cyclohex-1-ene-1-carbonyl-CoA. Arg375 contributes to the cyclohexa-1,5-diene-1-carbonyl-CoA binding site.

This sequence belongs to the acyl-CoA dehydrogenase family. Homotetramer. FAD serves as cofactor.

It carries out the reaction cyclohex-1-ene-1-carbonyl-CoA + oxidized [electron-transfer flavoprotein] + H(+) = cyclohexa-1,5-diene-1-carbonyl-CoA + reduced [electron-transfer flavoprotein]. Its function is as follows. Acyl-CoA dehydrogenase involved in the anaerobic degradation of cyclohexane carboxylic acid (CHC). Catalyzes the 1,4-dehydrogenation at C3 and C6 of cyclohex-1-ene-1-carbonyl-CoA (CHeneCoA or Ch1CoA) to cyclohexa-1,5-diene-1-carbonyl-CoA (CHdieneCoA or Ch1,5CoA). Also able to catalyze, at a lower rate, the dehydrogenation at C3 and C4 of CHdieneCoA to benzoyl-CoA. The polypeptide is Cyclohex-1-ene-1-carbonyl-CoA dehydrogenase (Geobacter metallireducens (strain ATCC 53774 / DSM 7210 / GS-15)).